Reading from the N-terminus, the 423-residue chain is Glucose-1-phosphate adenylyltransferase (423 aa).

Alpha-D-glucose 1-phosphate is bound by residues Y112, G177, E192–K193, and S210.

Belongs to the bacterial/plant glucose-1-phosphate adenylyltransferase family. As to quaternary structure, homotetramer.

It catalyses the reaction alpha-D-glucose 1-phosphate + ATP + H(+) = ADP-alpha-D-glucose + diphosphate. It functions in the pathway glycan biosynthesis; glycogen biosynthesis. Its function is as follows. Involved in the biosynthesis of ADP-glucose, a building block required for the elongation reactions to produce glycogen. Catalyzes the reaction between ATP and alpha-D-glucose 1-phosphate (G1P) to produce pyrophosphate and ADP-Glc. This chain is Glucose-1-phosphate adenylyltransferase, found in Rhodospirillum rubrum (strain ATCC 11170 / ATH 1.1.1 / DSM 467 / LMG 4362 / NCIMB 8255 / S1).